A 368-amino-acid polypeptide reads, in one-letter code: Proline-rich protein 5-like (368 aa).

S28 carries the post-translational modification Phosphoserine. The segment at 312–368 (LGEESGGEDKCLLLQPSFPPPHRQCSSEPNITDGPDEPEQGATGSQEDSELNCASLS) is disordered. Over residues 353-368 (ATGSQEDSELNCASLS) the composition is skewed to polar residues.

This sequence belongs to the PROTOR family. As to quaternary structure, interacts with the mammalian target of rapamycin complex 2 (mTORC2) which contains MTOR, MLST8, PRR5, RICTOR, MAPKAP1 and DEPTOR. Interacts with RFFL. Interacts (via C-terminus) with ZFP36 (via C-terminus); this interaction may accelerate ZFP36-mediated mRNA decay during stress. Interacts with RICTOR. Post-translationally, ubiquitinated. Ubiquitination by RFFL promotes proteasomal degradation of PRR5L thereby modifying the substrate-specific activity of the mTORC2 complex. Ubiquitination by RFFL is stimulated by LPA/lysophosphatidic acid.

Associates with the mTORC2 complex that regulates cellular processes including survival and organization of the cytoskeleton. Regulates the activity of the mTORC2 complex in a substrate-specific manner preventing for instance the specific phosphorylation of PKCs and thereby controlling cell migration. Plays a role in the stimulation of ZFP36-mediated mRNA decay of several ZFP36-associated mRNAs, such as TNF-alpha and GM-CSF, in response to stress. Required for ZFP36 localization to cytoplasmic stress granule (SG) and P-body (PB) in response to stress. In Bos taurus (Bovine), this protein is Proline-rich protein 5-like (PRR5L).